The chain runs to 127 residues: EF-hand calcium-binding domain-containing protein 10 (127 aa).

In terms of domain architecture, EF-hand spans 63-98 (MDNSNIVAMFEMMDSSGRGTISFVQYKEALKTLGLC).

The sequence is that of EF-hand calcium-binding domain-containing protein 10 (EFCAB10) from Homo sapiens (Human).